A 228-amino-acid polypeptide reads, in one-letter code: uncharacterized protein (228 aa).

Residues 1 to 23 (MIRHTRLLLASLCLIATGARASA) form the signal peptide.

This is an uncharacterized protein from Methylorubrum extorquens (strain ATCC 14718 / DSM 1338 / JCM 2805 / NCIMB 9133 / AM1) (Methylobacterium extorquens).